The chain runs to 853 residues: DNA mismatch repair protein MutS (853 aa).

Residue 614 to 621 (GPNMGGKS) participates in ATP binding.

Belongs to the DNA mismatch repair MutS family.

Its function is as follows. This protein is involved in the repair of mismatches in DNA. It is possible that it carries out the mismatch recognition step. This protein has a weak ATPase activity. This is DNA mismatch repair protein MutS from Escherichia coli O157:H7 (strain EC4115 / EHEC).